Here is a 368-residue protein sequence, read N- to C-terminus: Probable replication factor C subunit 5 (368 aa).

69 to 76 contributes to the ATP binding site; that stretch reads GPPGTGKT.

The protein belongs to the activator 1 small subunits family. In terms of assembly, heteropentamer of various rfc subunits that forms a complex (RFC) with PCNA in the presence of ATP.

The protein resides in the nucleus. The elongation of primed DNA templates by DNA polymerase delta and epsilon requires the action of the accessory proteins proliferating cell nuclear antigen (PCNA) and activator 1. In Caenorhabditis elegans, this protein is Probable replication factor C subunit 5.